The sequence spans 557 residues: Probable asparagine synthetase [glutamine-hydrolyzing] (557 aa).

Cys-2 acts as the For GATase activity in catalysis. The Glutamine amidotransferase type-2 domain occupies 2-188 (CGILAVHHVA…PGHYYDSETK (187 aa)). L-glutamine contacts are provided by residues 50-54 (RLAIV), 75-77 (NGE), and Asp-99. An Asparagine synthetase domain is found at 196–531 (PSWWDENKIP…PRQCADTVMR (336 aa)). ATP-binding positions include Leu-235, Ile-280, and 354–355 (SG). Phosphoserine occurs at positions 391 and 489.

Its subcellular location is the cytoplasm. It localises to the nucleus. It catalyses the reaction L-aspartate + L-glutamine + ATP + H2O = L-asparagine + L-glutamate + AMP + diphosphate + H(+). Its pathway is amino-acid biosynthesis; L-asparagine biosynthesis; L-asparagine from L-aspartate (L-Gln route): step 1/1. The polypeptide is Probable asparagine synthetase [glutamine-hydrolyzing] (asn1) (Schizosaccharomyces pombe (strain 972 / ATCC 24843) (Fission yeast)).